The following is a 432-amino-acid chain: Adenosylhomocysteinase (432 aa).

Substrate is bound by residues Thr-56, Asp-131, and Glu-156. An NAD(+)-binding site is contributed by 157–159; the sequence is TTT. Substrate-binding residues include Lys-186 and Asp-190. Residues 222–227, Glu-243, Asn-248, 299–301, Asn-346, His-353, Lys-426, 426–430, and Tyr-430 each bind NAD(+); these read GDVGKG, IGH, and KPDHY.

This sequence belongs to the adenosylhomocysteinase family. As to quaternary structure, interacts with AhcyL1; the interaction may negatively regulate Ahcy catalytic activity. It depends on NAD(+) as a cofactor.

The enzyme catalyses S-adenosyl-L-homocysteine + H2O = L-homocysteine + adenosine. Its pathway is amino-acid biosynthesis; L-homocysteine biosynthesis; L-homocysteine from S-adenosyl-L-homocysteine: step 1/1. Its function is as follows. Adenosylhomocysteine is a competitive inhibitor of S-adenosyl-L-methionine-dependent methyl transferase reactions; therefore adenosylhomocysteinase may play a key role in the control of methylations via regulation of the intracellular concentration of adenosylhomocysteine. This Drosophila melanogaster (Fruit fly) protein is Adenosylhomocysteinase.